Consider the following 166-residue polypeptide: Phosphopantetheine adenylyltransferase (166 aa).

Threonine 14 contacts substrate. ATP contacts are provided by residues threonine 14–phenylalanine 15 and histidine 22. Residues lysine 46, leucine 78, and arginine 92 each contribute to the substrate site. ATP contacts are provided by residues glycine 93–arginine 95, glutamate 103, and tryptophan 128–serine 134.

The protein belongs to the bacterial CoaD family. Homohexamer. It depends on Mg(2+) as a cofactor.

The protein resides in the cytoplasm. It carries out the reaction (R)-4'-phosphopantetheine + ATP + H(+) = 3'-dephospho-CoA + diphosphate. Its pathway is cofactor biosynthesis; coenzyme A biosynthesis; CoA from (R)-pantothenate: step 4/5. Functionally, reversibly transfers an adenylyl group from ATP to 4'-phosphopantetheine, yielding dephospho-CoA (dPCoA) and pyrophosphate. This is Phosphopantetheine adenylyltransferase from Maridesulfovibrio salexigens (strain ATCC 14822 / DSM 2638 / NCIMB 8403 / VKM B-1763) (Desulfovibrio salexigens).